Consider the following 208-residue polypeptide: Octanoyltransferase (208 aa).

Residues 31–208 (GSEREMVWLL…LKKEFYKVFA (178 aa)) form the BPL/LPL catalytic domain. Substrate is bound by residues 70-77 (RGGKYSYH), 142-144 (AFG), and 155-157 (GVA). The active-site Acyl-thioester intermediate is C173.

It belongs to the LipB family.

Its subcellular location is the cytoplasm. The catalysed reaction is octanoyl-[ACP] + L-lysyl-[protein] = N(6)-octanoyl-L-lysyl-[protein] + holo-[ACP] + H(+). The protein operates within protein modification; protein lipoylation via endogenous pathway; protein N(6)-(lipoyl)lysine from octanoyl-[acyl-carrier-protein]: step 1/2. Catalyzes the transfer of endogenously produced octanoic acid from octanoyl-acyl-carrier-protein onto the lipoyl domains of lipoate-dependent enzymes. Lipoyl-ACP can also act as a substrate although octanoyl-ACP is likely to be the physiological substrate. This chain is Octanoyltransferase, found in Anaplasma phagocytophilum (strain HZ).